We begin with the raw amino-acid sequence, 737 residues long: MKQIDSEDSITVPNDTPEDNSASSMQPVMSNLSIEEHQSENEPIEQEQADAKDPLLSKYHLACQQGDLATVKEIIENGVIDLKHDYDDVERVSGLHWASINNRLSVVRYLISKDVDVNFQGGELNATPLHWAARYGYVYIVDYLLEHGADPSVTDAQGFNLLHLSINSSNIMLVIYVLFFVIDDKLDIDCVDPNGRTALLWAAYQGDSLSVETLLKFRASVKATDKGGFTPLHWGTVKGQAQVLKHLIENGADFFQKTADGKNCFAIAHDMNTTGSLVGALYQCGFNKEGFAIPVYFKKSLHTKLVTFFAPWIFIGVLFKCFASIHPIFSLIFSILLGLGMRYTLKKYVIPAYAQRNTRQSFLKTPFLAGVFSGSVFWASYTWLTRIMPLTLIEEPITNLLFFAGVVLLASLFVKLVRSDPGLIPEETDHSKVKETIKELLNVGKFDAKHFCISTWVRKPIRSKFSNFSRALVTRFDHFCPWIYNDIGLRNHKTFLFFILCLETCIFVFLKLCMEYFDVLEDTFEDDYDLNCGIFGEDLCAGFFFDTFTFLVLAWTCFQGIWVGFLTFVQLFQTAKGVTNYEFSTLSKRRHNHDSSVNEYFTTTPLELIDEEEADPLNPVIPGNNPRDPLMQKSRTCFGICWTLTGLDQFVMVIKETFGVAQREEPRNNILSFKISTDYGWRTNLKDFWLTSDITAPTWQRFLYSPSCSKALLNGEEVDYFKLYKLPERHYLAEEIV.

Positions 1–47 (MKQIDSEDSITVPNDTPEDNSASSMQPVMSNLSIEEHQSENEPIEQE) are disordered. Residues 1-304 (MKQIDSEDSI…VYFKKSLHTK (304 aa)) lie on the Cytoplasmic side of the membrane. The span at 9-33 (SITVPNDTPEDNSASSMQPVMSNLS) shows a compositional bias: polar residues. 6 ANK repeats span residues 54 to 84 (PLLS…DLKH), 90 to 119 (ERVS…DVNF), 124 to 153 (LNAT…DPSV), 157 to 190 (QGFN…DIDC), 194 to 223 (NGRT…SVKA), and 227 to 256 (GGFT…DFFQ). A run of 2 helical transmembrane segments spans residues 305–325 (LVTF…FASI) and 326–346 (HPIF…YTLK). Topologically, residues 347–364 (KYVIPAYAQRNTRQSFLK) are cytoplasmic. The chain crosses the membrane as a helical span at residues 365–385 (TPFLAGVFSGSVFWASYTWLT). Topologically, residues 386 to 396 (RIMPLTLIEEP) are lumenal. Residues 397–417 (ITNLLFFAGVVLLASLFVKLV) traverse the membrane as a helical segment. Over 418-493 (RSDPGLIPEE…YNDIGLRNHK (76 aa)) the chain is Cytoplasmic. One can recognise a DHHC domain in the interval 450–500 (HFCISTWVRKPIRSKFSNFSRALVTRFDHFCPWIYNDIGLRNHKTFLFFIL). Residue Cys480 is the S-palmitoyl cysteine intermediate of the active site. A helical membrane pass occupies residues 494–514 (TFLFFILCLETCIFVFLKLCM). The Lumenal portion of the chain corresponds to 515 to 547 (EYFDVLEDTFEDDYDLNCGIFGEDLCAGFFFDT). A helical membrane pass occupies residues 548–568 (FTFLVLAWTCFQGIWVGFLTF). The Cytoplasmic portion of the chain corresponds to 569–737 (VQLFQTAKGV…ERHYLAEEIV (169 aa)).

The protein belongs to the DHHC palmitoyltransferase family. AKR/ZDHHC17 subfamily.

It is found in the early endosome membrane. Its subcellular location is the golgi apparatus membrane. It carries out the reaction L-cysteinyl-[protein] + hexadecanoyl-CoA = S-hexadecanoyl-L-cysteinyl-[protein] + CoA. Functionally, palmitoyltransferase specific for casein kinase 1. The polypeptide is Palmitoyltransferase AKR1 (AKR1) (Lachancea kluyveri (strain ATCC 58438 / CBS 3082 / BCRC 21498 / NBRC 1685 / JCM 7257 / NCYC 543 / NRRL Y-12651) (Yeast)).